A 285-amino-acid chain; its full sequence is NAC domain-containing protein 92 (285 aa).

Residues 20-170 (LPPGFRFHPT…EWVICRVFQK (151 aa)) enclose the NAC domain. Residues 117–176 (VGMKKTLVFYKGRAPKGVKTNWVMHEYRLEGKYCIENLPQTAKNEWVICRVFQKRADGTK) mediate DNA binding.

As to quaternary structure, forms homodimers. Interacts with GLK1 and GLK2. Interacts with NLA. In terms of processing, ubiquitinated by NLA. Ubiquitination of NAC92 leads to its degradation by the proteasome during leaf senescence under nitrogen deficiency. As to expression, mostly expressed in roots and flowers, and, to a lower extent, in shoots and leaves. Particularly expressed in old and senescing tissues.

Its subcellular location is the nucleus. Transcription activator that binds to DNA in promoters of target genes on a specific bipartite motif 5'-[ACG][CA]GT[AG](5-6n)[CT]AC[AG]-3'. Promotes lateral root development. Triggers the expression of senescence-associated genes during age-, salt- and dark-induced senescence through a regulatory network that may involve cross-talk with salt- and H(2)O(2)-dependent signaling pathways. Also regulates genes during seed germination. Positively regulates aging-induced cell death. Involved in age-related resistance (ARR) against Pseudomonas syringae pv. tomato and Hyaloperonospora arabidopsidis. Antagonizes GLK1 and GLK2 transcriptional activity, shifting the balance from chloroplast maintenance towards deterioration during leaf senescence. Promotes the expression of senescence-associated genes, including ENDO1/BFN1, SWEET15/SAG29 and SINA1/At3g13672, during senescence onset. The polypeptide is NAC domain-containing protein 92 (Arabidopsis thaliana (Mouse-ear cress)).